Reading from the N-terminus, the 152-residue chain is Xanthine-guanine phosphoribosyltransferase (152 aa).

Residues 37–38, Arg69, and 88–96 each bind 5-phospho-alpha-D-ribose 1-diphosphate; these read RG and DDLVDTGVT. Arg69 contributes to the GMP binding site. Asp89 provides a ligand contact to Mg(2+). Positions 92 and 135 each coordinate guanine. Asp92 and Ile135 together coordinate xanthine. Residues 92–96 and 134–135 contribute to the GMP site; these read DTGVT and WI.

The protein belongs to the purine/pyrimidine phosphoribosyltransferase family. XGPT subfamily. In terms of assembly, homotetramer. Requires Mg(2+) as cofactor.

It localises to the cell inner membrane. It catalyses the reaction GMP + diphosphate = guanine + 5-phospho-alpha-D-ribose 1-diphosphate. The enzyme catalyses XMP + diphosphate = xanthine + 5-phospho-alpha-D-ribose 1-diphosphate. It carries out the reaction IMP + diphosphate = hypoxanthine + 5-phospho-alpha-D-ribose 1-diphosphate. It functions in the pathway purine metabolism; GMP biosynthesis via salvage pathway; GMP from guanine: step 1/1. Its pathway is purine metabolism; XMP biosynthesis via salvage pathway; XMP from xanthine: step 1/1. In terms of biological role, purine salvage pathway enzyme that catalyzes the transfer of the ribosyl-5-phosphate group from 5-phospho-alpha-D-ribose 1-diphosphate (PRPP) to the N9 position of the 6-oxopurines guanine and xanthine to form the corresponding ribonucleotides GMP (guanosine 5'-monophosphate) and XMP (xanthosine 5'-monophosphate), with the release of PPi. To a lesser extent, also acts on hypoxanthine. This is Xanthine-guanine phosphoribosyltransferase from Sodalis glossinidius (strain morsitans).